We begin with the raw amino-acid sequence, 218 residues long: Protease PrsW (218 aa).

Residues 1–23 (MFAIISAGIAPGIALLSYFYLKD) traverse the membrane as a helical segment. The Cytoplasmic portion of the chain corresponds to 24 to 30 (QYDNEPV). Residues 31-53 (HMVLRSFFLGVVLVFPIMFIQYV) form a helical membrane-spanning segment. The Extracellular segment spans residues 54–98 (LEKENVGGGSFFVSFLSSGFLEESLKWFILMISVYPHAHFDEHYD). Residues 99–121 (GIVYGASVSLGFATLENILYLIG) traverse the membrane as a helical segment. The Cytoplasmic portion of the chain corresponds to 122–129 (HGVEHAFV). A helical transmembrane segment spans residues 130–151 (RALLPVSCHALIGVIMGFYLGK). Residues 152–180 (ARFSADKARVKWLTLSLVVPSLLHGSYDF) lie on the Extracellular side of the membrane. Residues 181–203 (ILTALSNWIYYMLPFMVFLWWFG) form a helical membrane-spanning segment. At 204-218 (LRKAKKARSVNMMQV) the chain is on the cytoplasmic side.

The protein belongs to the protease PrsW family.

The protein resides in the cell membrane. In terms of biological role, involved in the degradation of anti-sigma-W factor RsiW. Responsible for Site-1 cleavage of the RsiW anti-sigma factor. This results, after two other proteolytic steps catalyzed by the RasP and ClpXP proteases, in the release of SigW and the transcription activation of the genes under the control of the sigma-W factor. Seems to be responsible for sensing antimicrobial peptides that damage the cell membrane and other agents that cause cell envelope stress. Therefore it is a protease governing regulated intramembrane proteolysis and resistance to antimicrobial peptides in B.subtilis. In Bacillus subtilis (strain 168), this protein is Protease PrsW.